We begin with the raw amino-acid sequence, 166 residues long: Phosphopantetheine adenylyltransferase (166 aa).

S9 provides a ligand contact to substrate. Residues 9 to 10 and H17 each bind ATP; that span reads SF. Residues K41, L74, and K88 each coordinate substrate. Residues 89-91, E99, and 123-129 contribute to the ATP site; these read GLR and YIHLSST.

It belongs to the bacterial CoaD family. In terms of assembly, homohexamer. The cofactor is Mg(2+).

It localises to the cytoplasm. The enzyme catalyses (R)-4'-phosphopantetheine + ATP + H(+) = 3'-dephospho-CoA + diphosphate. Its pathway is cofactor biosynthesis; coenzyme A biosynthesis; CoA from (R)-pantothenate: step 4/5. In terms of biological role, reversibly transfers an adenylyl group from ATP to 4'-phosphopantetheine, yielding dephospho-CoA (dPCoA) and pyrophosphate. The polypeptide is Phosphopantetheine adenylyltransferase (Pseudarthrobacter chlorophenolicus (strain ATCC 700700 / DSM 12829 / CIP 107037 / JCM 12360 / KCTC 9906 / NCIMB 13794 / A6) (Arthrobacter chlorophenolicus)).